We begin with the raw amino-acid sequence, 76 residues long: U-scoloptoxin(13)-Sa1a (76 aa).

A signal peptide spans 1–22; sequence MAYIFALIFAFVVCINTDVIQA.

Belongs to the scoloptoxin-13 family. In terms of processing, contains 4 disulfide bonds. In terms of tissue distribution, expressed by the venom gland.

The protein localises to the secreted. This chain is U-scoloptoxin(13)-Sa1a, found in Scolopendra alternans (Florida Keys giant centipede).